The chain runs to 87 residues: Type 3 secretion system needle filament protein (87 aa).

It belongs to the SctF family. The core secretion machinery of the T3SS is composed of approximately 20 different proteins, including cytoplasmic components, a base, an export apparatus and a needle. This subunit polymerizes and forms the helical needle filament. Forms high-order oligomers in vitro. Forms a stable ternary complex with the YscE-YscG chaperone. Interacts directly with YscG but makes very little direct contact with YscE. Interacts with the needle adapter protein YscI/SctI.

It localises to the secreted. It is found in the cell surface. The secretion and/or polymerization may be controlled by the type III secretion system regulator YopR. Interaction with YscE-YscG chaperone prevents premature polymerization of YscF/SctF in the bacterial cytosol and is required for its stability and efficient secretion. Interaction with the needle adapter protein YscI/SctI is required for YscF/SctF secretion, needle assembly and Yop secretion. The N-terminus varies among bacterial species, not only in amino acid composition but also in the number of amino acids, and may function in manipulating the host response to the advantage of the bacteria. In Y.pestis, the N-terminus can function to decrease cytokine induction, perhaps contributing to a favorable immune environment leading to survival of Y.pestis within the eukaryotic host. Component of the type III secretion system (T3SS), also called injectisome, which is used to inject bacterial effector proteins into eukaryotic host cells. YscF/SctF forms the external needle filament that protrudes from the bacterial surface. Essential for the calcium-dependent regulation of T3SS and Yop secretion. Required to block Yop secretion in the presence of extracellular calcium. May be the extracellular T3SS component that senses extracellular calcium and/or participates in transmitting the calcium signal to the cytoplasmic compartment where the block in secretion is initiated. Its function is as follows. During infection, can induce innate immune responses. The needle proteins interact with host TLR2 or TLR4, and induce signaling by NF-kappa-B and/or AP-1. This activation is MyD88 dependent and results in increased expression of cytokines, including TNF-alpha, IL-6 and IL-8. Innate immune responses are modulated by the N-terminal region of YscF/SctF. This chain is Type 3 secretion system needle filament protein, found in Yersinia pestis.